A 114-amino-acid polypeptide reads, in one-letter code: Large ribosomal subunit protein uL22 (114 aa).

It belongs to the universal ribosomal protein uL22 family. As to quaternary structure, part of the 50S ribosomal subunit.

Functionally, this protein binds specifically to 23S rRNA; its binding is stimulated by other ribosomal proteins, e.g. L4, L17, and L20. It is important during the early stages of 50S assembly. It makes multiple contacts with different domains of the 23S rRNA in the assembled 50S subunit and ribosome. Its function is as follows. The globular domain of the protein is located near the polypeptide exit tunnel on the outside of the subunit, while an extended beta-hairpin is found that lines the wall of the exit tunnel in the center of the 70S ribosome. In Alcanivorax borkumensis (strain ATCC 700651 / DSM 11573 / NCIMB 13689 / SK2), this protein is Large ribosomal subunit protein uL22.